The chain runs to 375 residues: Queuine tRNA-ribosyltransferase (375 aa).

The active-site Proton acceptor is Asp90. Substrate-binding positions include 90 to 94 (DSGGF), Asp144, Gln190, and Gly217. The interval 248–254 (GIGTPHY) is RNA binding. The active-site Nucleophile is the Asp267. Residues 272–276 (TRIAR) form an RNA binding; important for wobble base 34 recognition region. Cys305, Cys307, Cys310, and His336 together coordinate Zn(2+).

Belongs to the queuine tRNA-ribosyltransferase family. In terms of assembly, homodimer. Within each dimer, one monomer is responsible for RNA recognition and catalysis, while the other monomer binds to the replacement base PreQ1. Zn(2+) serves as cofactor.

The catalysed reaction is 7-aminomethyl-7-carbaguanine + guanosine(34) in tRNA = 7-aminomethyl-7-carbaguanosine(34) in tRNA + guanine. Its pathway is tRNA modification; tRNA-queuosine biosynthesis. Its function is as follows. Catalyzes the base-exchange of a guanine (G) residue with the queuine precursor 7-aminomethyl-7-deazaguanine (PreQ1) at position 34 (anticodon wobble position) in tRNAs with GU(N) anticodons (tRNA-Asp, -Asn, -His and -Tyr). Catalysis occurs through a double-displacement mechanism. The nucleophile active site attacks the C1' of nucleotide 34 to detach the guanine base from the RNA, forming a covalent enzyme-RNA intermediate. The proton acceptor active site deprotonates the incoming PreQ1, allowing a nucleophilic attack on the C1' of the ribose to form the product. After dissociation, two additional enzymatic reactions on the tRNA convert PreQ1 to queuine (Q), resulting in the hypermodified nucleoside queuosine (7-(((4,5-cis-dihydroxy-2-cyclopenten-1-yl)amino)methyl)-7-deazaguanosine). In Borrelia hermsii (strain HS1 / DAH), this protein is Queuine tRNA-ribosyltransferase.